We begin with the raw amino-acid sequence, 29 residues long: Cyclotide psyleio B (29 aa).

A cross-link (cyclopeptide (Gly-Arg)) is located at residues 1–29 (GDLPICGETCFGGTCNTPGCVCAWPVCNR). 3 cysteine pairs are disulfide-bonded: Cys6-Cys20, Cys10-Cys22, and Cys15-Cys27.

In terms of processing, this is a cyclic peptide.

Its function is as follows. Probably participates in a plant defense mechanism. The chain is Cyclotide psyleio B from Psychotria brachyceras.